The chain runs to 798 residues: Shutoff protein (798 aa).

The span at 1 to 14 (MESTADGDKARGEE) shows a compositional bias: basic and acidic residues. Residues 1 to 123 (MESTADGDKA…SHSSDSELGC (123 aa)) form a disordered region. Residues 33–49 (APEDEHPDDGEPDEPAD) are compositionally biased toward acidic residues. Positions 68 to 80 (GGRDAECDGEAAR) are enriched in basic and acidic residues. The span at 86–105 (DESSAPTTPSTAVRRSSGES) shows a compositional bias: polar residues. The binding to host EIF4G stretch occupies residues 309 to 376 (LMEVLLQPFA…GRPLYRSARA (68 aa)). Residues 379 to 497 (SVFREPSSIK…AIYALETPTE (119 aa)) enclose the RRM domain. A Phosphotyrosine; by host modification is found at Tyr711. A disordered region spans residues 740-798 (YADHARGAATSAEPSRALRPTSVATAAGNRTRGCSSARYRLGPTLRRRSNSSWPREWST). Polar residues predominate over residues 789–798 (NSSWPREWST).

This sequence belongs to the adenoviridae shutoff protein family. In terms of assembly, monomer. Interacts with hexon protein; this interaction allows chaperoning and trimerization of hexon proteins. Interacts (via N-terminus) with host initiation factor EIF4G (via C-terminus). Interacts (via RRM domain) with viral mRNAs that contain the tripartite leader; this interaction allows ribosome shunting and expression of viral late mRNAs. Might be cleaved by the viral protease. In terms of processing, phosphorylated. Tyrosine phosphorylation enhances preferential binding to tripartite leader mRNAs and allows ribosome shunting. Post-translationally, methylated. Asymmetric dimethylation by host PRMT1 of the Arg/Gly-rich region may regulate shutoff protein binding to hexon and promote the capsid assembly in the nucleus.

It localises to the host cytoplasm. Functionally, protein that inhibits host translation while promoting late viral translation by ribosome shunting. Blocks host cap-dependent translation by binding to eIF4G, displacing MKNK1 from cap initiation complexes and preventing EIF4E phosphorylation. Binds to the tripartite leader sequence of viral late mRNAs and recruits host eIF4G, PABPC1/poly-A binding protein and 40S ribosomes subunits on viral mRNAs, allowing ribosome shunting and efficient translation of late viral mRNAs even though conventional translation via ribosome scanning from the cap has been shut off in the host cell. During assembly, acts as a chaperone protein that helps hexon proteins assembly into trimers. This is Shutoff protein from Galliformes (FAdV-10).